We begin with the raw amino-acid sequence, 461 residues long: Phosphatidate cytidylyltransferase 1 (461 aa).

Residues 1–68 are disordered; sequence MLELRHRGGC…PEVPPSSDRT (68 aa). Position 7 is an omega-N-methylarginine (Arg-7). Residues 22–56 show a composition bias toward basic and acidic residues; it reads REGEAAGGDHETESTSDKETDIDDRYGDLDARGDS. Phosphoserine occurs at positions 35 and 37. A run of 6 helical transmembrane segments spans residues 96–116, 149–169, 183–203, 230–250, 279–299, and 357–377; these read MISL…LLVL, FLLC…FATF, HRFI…LSLV, LVIQ…SSVI, GFIG…YVLS, and IALS…ASGF.

The protein belongs to the CDS family. As to quaternary structure, homodimer. Interacts with FOS; this interaction may enhance catalytic activity. Mg(2+) serves as cofactor. As to expression, brain, retina and testis. Found in cerebellar Purkinje cells, pineal body, inner segment of photoreceptor cells and postmitotic spermatocytes and spermatids.

It is found in the endoplasmic reticulum membrane. The catalysed reaction is a 1,2-diacyl-sn-glycero-3-phosphate + CTP + H(+) = a CDP-1,2-diacyl-sn-glycerol + diphosphate. It catalyses the reaction 1-octadecanoyl-2-(5Z,8Z,11Z,14Z-eicosatetraenoyl)-sn-glycero-3-phosphate + CTP + H(+) = 1-octadecanoyl-2-(5Z,8Z,11Z,14Z-eicosatetraenoyl)-sn-glycero-3-cytidine-5'-diphosphate + diphosphate. It carries out the reaction 1-octadecanoyl-2-(9Z,12Z-octadecadienoyl)-sn-glycero-3-phosphate + CTP + H(+) = 1-octadecanoyl-2-(9Z,12Z-octadecadienoyl)-sn-glycero-3-cytidine-5'-diphosphate + diphosphate. The enzyme catalyses 1-hexadecanoyl-2-(5Z,8Z,11Z,14Z-eicosatetraenoyl)-sn-glycero-3-phosphate + CTP + H(+) = 1-hexadecanoyl-2-(5Z,8Z,11Z,14Z-eicosatetraenoyl)-sn-glycero-3-cytidine-5'-diphosphate + diphosphate. The catalysed reaction is 1,2-di-(5Z,8Z,11Z,14Z)-eicosatetraenoyl-sn-glycero-3-phosphate + CTP + H(+) = 1,2-di-(5Z,8Z,11Z,14Z-eicosatetraenoyl)-sn-glycero-3-cytidine-5'-diphosphate + diphosphate. It catalyses the reaction 1-octadecanoyl-2-(9Z-octadecenoyl)-sn-glycero-3-phosphate + CTP + H(+) = 1-octadecanoyl-2-(9Z-octadecenoyl)-sn-glycero-3-cytidine-5'-diphosphate + diphosphate. It carries out the reaction 1-octadecanoyl-2-(4Z,7Z,10Z,13Z,16Z,19Z-docosahexaenoyl)-sn-glycero-3-phosphate + CTP + H(+) = 1-octadecanoyl-2-(4Z,7Z,10Z,13Z,16Z,19Z-docosahexaenoyl)-sn-glycero-3-cytidine-5'-diphosphate + diphosphate. The enzyme catalyses 1,2-di-(9Z,12Z-octadecadienoyl)-sn-glycero-3-phosphate + CTP + H(+) = 1,2-di-(9Z,12Z-octadecadienoyl)-sn-glycero-3-cytidine-5'-diphosphate + diphosphate. The catalysed reaction is 1,2-di-(9Z-octadecenoyl)-sn-glycero-3-phosphate + CTP + H(+) = 1,2-di-(9Z-octadecenoyl)-sn-glycero-3-cytidine-5'-diphosphate + diphosphate. It functions in the pathway phospholipid metabolism; CDP-diacylglycerol biosynthesis; CDP-diacylglycerol from sn-glycerol 3-phosphate: step 3/3. Activated by GTP. Inhibited by CDP-diacylglycerol and by phosphatidylglycerol 4,5-bisphosphate (PPI2). In terms of biological role, catalyzes the conversion of phosphatidic acid (PA) to CDP-diacylglycerol (CDP-DAG), an essential intermediate in the synthesis of phosphatidylglycerol, cardiolipin and phosphatidylinositol. Exhibits almost no acyl chain preference for PA, showing no discrimination for the sn-1/sn-2 acyl chain composition of PAs. Plays an important role in regulatinng the growth of lipid droplets which are storage organelles at the center of lipid and energy homeostasis. Positively regulates the differentiation and development of adipocytes. In Rattus norvegicus (Rat), this protein is Phosphatidate cytidylyltransferase 1.